Consider the following 239-residue polypeptide: Purine nucleoside phosphorylase DeoD-type (239 aa).

An a purine D-ribonucleoside-binding site is contributed by histidine 5. The phosphate site is built by glycine 21 and arginine 25. N6-acetyllysine is present on lysine 27. Residues arginine 44 and 88-91 each bind phosphate; that span reads RVGS. Residues 180 to 182 and 204 to 205 each bind a purine D-ribonucleoside; these read EME and SD. The Proton donor role is filled by aspartate 205.

Belongs to the PNP/UDP phosphorylase family. As to quaternary structure, homohexamer; trimer of homodimers.

The catalysed reaction is a purine D-ribonucleoside + phosphate = a purine nucleobase + alpha-D-ribose 1-phosphate. It carries out the reaction a purine 2'-deoxy-D-ribonucleoside + phosphate = a purine nucleobase + 2-deoxy-alpha-D-ribose 1-phosphate. Its function is as follows. Catalyzes the reversible phosphorolytic breakdown of the N-glycosidic bond in the beta-(deoxy)ribonucleoside molecules, with the formation of the corresponding free purine bases and pentose-1-phosphate. This chain is Purine nucleoside phosphorylase DeoD-type, found in Escherichia coli O81 (strain ED1a).